The chain runs to 394 residues: Elongation factor Tu 2 (394 aa).

The region spanning 9–204 (KPHCNIGTIG…SIDDYIPQPT (196 aa)) is the tr-type G domain. The segment at 18-25 (GHVDHGKT) is G1. 18-25 (GHVDHGKT) provides a ligand contact to GTP. Residue Thr25 coordinates Mg(2+). The G2 stretch occupies residues 61–65 (GITIQ). The segment at 82–85 (DCPG) is G3. GTP-binding positions include 82 to 86 (DCPGH) and 137 to 140 (NKID). Residues 137-140 (NKID) are G4. Residues 174–176 (SAL) form a G5 region.

Belongs to the TRAFAC class translation factor GTPase superfamily. Classic translation factor GTPase family. EF-Tu/EF-1A subfamily. Monomer.

It is found in the cytoplasm. The enzyme catalyses GTP + H2O = GDP + phosphate + H(+). GTP hydrolase that promotes the GTP-dependent binding of aminoacyl-tRNA to the A-site of ribosomes during protein biosynthesis. The polypeptide is Elongation factor Tu 2 (Orientia tsutsugamushi (strain Boryong) (Rickettsia tsutsugamushi)).